Consider the following 282-residue polypeptide: Shikimate dehydrogenase (NADP(+)) (282 aa).

Residues 15–17 (SKS) and threonine 62 each bind shikimate. Lysine 66 functions as the Proton acceptor in the catalytic mechanism. Shikimate contacts are provided by asparagine 87 and aspartate 103. NADP(+)-binding positions include 127–131 (GAGGA), 151–156 (NRTHTK), and methionine 220. Tyrosine 222 provides a ligand contact to shikimate. Glycine 244 is a binding site for NADP(+).

It belongs to the shikimate dehydrogenase family. As to quaternary structure, homodimer.

The catalysed reaction is shikimate + NADP(+) = 3-dehydroshikimate + NADPH + H(+). Its pathway is metabolic intermediate biosynthesis; chorismate biosynthesis; chorismate from D-erythrose 4-phosphate and phosphoenolpyruvate: step 4/7. In terms of biological role, involved in the biosynthesis of the chorismate, which leads to the biosynthesis of aromatic amino acids. Catalyzes the reversible NADPH linked reduction of 3-dehydroshikimate (DHSA) to yield shikimate (SA). This Shewanella baltica (strain OS223) protein is Shikimate dehydrogenase (NADP(+)).